The primary structure comprises 599 residues: Elongation factor 4 (599 aa).

One can recognise a tr-type G domain in the interval 2–184 (KNIRNFSIIA…RLVRDIPPPE (183 aa)). Residues 14–19 (DHGKST) and 131–134 (NKID) each bind GTP.

The protein belongs to the TRAFAC class translation factor GTPase superfamily. Classic translation factor GTPase family. LepA subfamily.

The protein localises to the cell inner membrane. It catalyses the reaction GTP + H2O = GDP + phosphate + H(+). Required for accurate and efficient protein synthesis under certain stress conditions. May act as a fidelity factor of the translation reaction, by catalyzing a one-codon backward translocation of tRNAs on improperly translocated ribosomes. Back-translocation proceeds from a post-translocation (POST) complex to a pre-translocation (PRE) complex, thus giving elongation factor G a second chance to translocate the tRNAs correctly. Binds to ribosomes in a GTP-dependent manner. The chain is Elongation factor 4 from Shigella dysenteriae serotype 1 (strain Sd197).